We begin with the raw amino-acid sequence, 175 residues long: Ribosome maturation factor RimM (175 aa).

In terms of domain architecture, PRC barrel spans 97-169; sequence EDKFYFHEII…TVRVITPEGL (73 aa).

It belongs to the RimM family. In terms of assembly, binds ribosomal protein uS19.

It is found in the cytoplasm. Functionally, an accessory protein needed during the final step in the assembly of 30S ribosomal subunit, possibly for assembly of the head region. Essential for efficient processing of 16S rRNA. May be needed both before and after RbfA during the maturation of 16S rRNA. It has affinity for free ribosomal 30S subunits but not for 70S ribosomes. The polypeptide is Ribosome maturation factor RimM (Christiangramia forsetii (strain DSM 17595 / CGMCC 1.15422 / KT0803) (Gramella forsetii)).